Here is a 334-residue protein sequence, read N- to C-terminus: Putative fatty acid elongase 1 (334 aa).

Residues 1–51 are Lumenal-facing; the sequence is MDLTGAHMLKIHRPSIDHPFGVDLWHLFEQLSIKTIGWNPSEFEYIPGKTP. A helical transmembrane segment spans residues 52–72; that stretch reads MSQWSSVIVSITAYYVIILSG. At 73-86 the chain is on the cytoplasmic side; the sequence is RAIMTNRKPLKQRR. Residues 87–107 form a helical membrane-spanning segment; the sequence is LFQLHNFILTIISGALLALLV. Over 108 to 135 the chain is Lumenal; the sequence is EEVFRNYMRNGLFYCVCDSRHFTQRLVT. Residues 136 to 156 traverse the membrane as a helical segment; the sequence is LYYLNYLTKYLELMDTVFLFL. Residues 157–160 lie on the Cytoplasmic side of the membrane; the sequence is KKKP. A helical membrane pass occupies residues 161–181; the sequence is LAFLHCYHHGITALLCFTQLL. Over 182–187 the chain is Lumenal; the sequence is GRTSVQ. The helical transmembrane segment at 188–208 threads the bilayer; sequence WGVIGLNLYVHVIMYSYYFLA. Over 209–224 the chain is Cytoplasmic; sequence ACGRRVWWKQWVTRVQ. Residues 225-245 traverse the membrane as a helical segment; that stretch reads IIQFVLDLILCYFGTYSHIAF. The Lumenal segment spans residues 246-260; sequence RYFPWLPHVGDCSGS. A helical transmembrane segment spans residues 261 to 281; the sequence is LFAAFFGCGVLSSYLFLFIGF. Residues 282 to 334 lie on the Cytoplasmic side of the membrane; it reads YINTYIKRGAKKNQRKAAGKADNTSVAAAAGSEALAATTATNASPFSARSRKL. A Phosphoserine modification is found at serine 325.

Belongs to the ELO family.

It localises to the endoplasmic reticulum membrane. It catalyses the reaction a very-long-chain acyl-CoA + malonyl-CoA + H(+) = a very-long-chain 3-oxoacyl-CoA + CO2 + CoA. May be involved in the synthesis of very long chain fatty acids. In Schizosaccharomyces pombe (strain 972 / ATCC 24843) (Fission yeast), this protein is Putative fatty acid elongase 1.